The following is a 649-amino-acid chain: Quinol oxidase subunit 1 (649 aa).

At 1-13 the chain is on the extracellular side; the sequence is MKFKWDEFFVTGD. A helical membrane pass occupies residues 14–34; the sequence is PLILGAQVSIALSTIAIIFVL. The Cytoplasmic segment spans residues 35-55; that stretch reads TYFKKWKWLWSEWITTVDHKK. The helical transmembrane segment at 56-76 threads the bilayer; that stretch reads LGIMYIISAVIMLFRGGVDGL. Over 77–104 the chain is Extracellular; sequence MMRAQLALPNNSFLDSNHYNEIFTTHGT. H102 contacts Fe(II)-heme a. The chain crosses the membrane as a helical span at residues 105 to 125; the sequence is IMIIFMAMPFLIGLINVVVPL. The Cytoplasmic portion of the chain corresponds to 126–139; sequence QIGARDVAFPYLNN. The chain crosses the membrane as a helical span at residues 140 to 160; the sequence is LSFWTFFVGAMLFNISFVIGG. At 161 to 187 the chain is on the extracellular side; it reads SPNAGWTSYMPLASNDMSPGPGENYYL. The helical transmembrane segment at 188 to 208 threads the bilayer; sequence LGLQIAGIGTLMTGINFMVTI. Topologically, residues 209-228 are cytoplasmic; sequence LKMRTKGMTLMRMPMFTWTT. The chain crosses the membrane as a helical span at residues 229–249; it reads LITMVIIVFAFPVLTVALALL. The Extracellular segment spans residues 250-273; sequence SFDRLFGAHFFTLEAGGMPMLWAN. A helical transmembrane segment spans residues 274–294; that stretch reads LFWIWGHPEVYIVILPAFGIF. Cu cation is bound by residues H280 and Y284. A cross-link (1'-histidyl-3'-tyrosine (His-Tyr)) is located at residues 280-284; that stretch reads HPEVY. The Cytoplasmic segment spans residues 295–305; that stretch reads SEIISSFARKQ. Residues 306 to 326 form a helical membrane-spanning segment; sequence LFGYTAMVGSIIAISVLSFLV. Residues 327–342 are Extracellular-facing; that stretch reads WTHHFFTMGNSASVNS. Residues H329 and H330 each contribute to the Cu cation site. A helical membrane pass occupies residues 343–363; sequence FFSITTMAISIPTGVKIFNWL. Over 364 to 376 the chain is Cytoplasmic; it reads FTMYKGRISFTTP. Residues 377–397 form a helical membrane-spanning segment; the sequence is MLWALAFIPNFVIGGVTGVML. Residues 398 to 415 are Extracellular-facing; that stretch reads AMAAADYQYHNTYFLVSH. Residue H415 participates in heme a3 binding. Residues 416–436 form a helical membrane-spanning segment; that stretch reads FHYVLIAGTVFACFAGFIFWY. Position 417 (H417) interacts with Fe(II)-heme a. Residues 437–451 are Cytoplasmic-facing; it reads PKMFGHKLNERIGKW. The chain crosses the membrane as a helical span at residues 452–472; it reads FFWIFMIGFNICFFPQYFLGL. Topologically, residues 473 to 492 are extracellular; the sequence is QGMPRRIYTYGPNDGWTTLN. A helical membrane pass occupies residues 493–513; sequence FISTVGAFMMGVGFLILCYNI. Over 514–585 the chain is Cytoplasmic; it reads YYSFRYSTRE…KFKKIHMPSN (72 aa). A helical transmembrane segment spans residues 586–603; that stretch reads SGRPFFMSVAFGIAGFGL. Residues 604 to 606 are Extracellular-facing; the sequence is VFE. Residues 607–624 traverse the membrane as a helical segment; it reads WYWMGVVGLIGVLLCMVL. At 625 to 649 the chain is on the cytoplasmic side; the sequence is RSFEYDNGYYISVDEIKETERKISE.

The protein belongs to the heme-copper respiratory oxidase family. It depends on Cu cation as a cofactor. Ferriheme a is required as a cofactor. Requires Heme A3. as cofactor.

Its subcellular location is the cell membrane. The enzyme catalyses 2 a quinol + O2 = 2 a quinone + 2 H2O. The protein operates within energy metabolism; oxidative phosphorylation. Functionally, catalyzes quinol oxidation with the concomitant reduction of oxygen to water. Major component for energy conversion during vegetative growth. This chain is Quinol oxidase subunit 1 (qoxB), found in Bacillus spizizenii (strain ATCC 23059 / NRRL B-14472 / W23) (Bacillus subtilis subsp. spizizenii).